A 554-amino-acid polypeptide reads, in one-letter code: MSEAEARPTNFIRQIVDEDLASGKHKSVHTRFPPEPNGYLHIGHAKSICLNFGIARDYQGQCNLRFDDTNPVKEDIEFVESIKHDVEWLGFEWSGNVRYSSDYFDQLHNYAVELINKGLAYVDELSPEQIREYRGSLTAPGKDSPYRGRSVEENLALFEKMRNGEFAEGTACLRAKIDMASSFIVMRDPVLYRIKFAEHHQTGNKWCIYPMYDFTHCISDALEGITHSLCTLEFQDNRRLYDWVLDNITIPCHPRQYEFSRLNLEYAIMSKRKLNLLVTEKIVEGWDDPRMPTVSGLRRRGYTAASIREFCQRIGVTKQDNNVEMMALEACIREELNENAPRAMAVLDPVKVVIENLTTGVEMVTMPNHPSKPEMGSREVPFSRDIYIDRADFREEANKQYKRLVLGKEVRLRNAYVIKAERIEKDAEGEITTIFCSYDPDTLSKDPADGRKVKGVIHWVSAEHALPAEIRVYDRLFSVPNPAAAEDFLTTINPESLVIKHGFVEPSLAAAQPEKAYQFEREGYFCADNRHSSAEHLVFNRTVGLRDTWAKIGA.

The 'HIGH' region motif lies at 34–44; the sequence is PEPNGYLHIGH. Residues 35–37 and 41–47 contribute to the ATP site; these read EPN and HIGHAKS. Residues D67 and Y212 each coordinate L-glutamine. Residues T231, 261-262, and 269-271 contribute to the ATP site; these read RL and MSK. A 'KMSKS' region motif is present at residues 268–272; sequence IMSKR.

Belongs to the class-I aminoacyl-tRNA synthetase family. Monomer.

The protein localises to the cytoplasm. The catalysed reaction is tRNA(Gln) + L-glutamine + ATP = L-glutaminyl-tRNA(Gln) + AMP + diphosphate. This chain is Glutamine--tRNA ligase, found in Serratia proteamaculans (strain 568).